Reading from the N-terminus, the 334-residue chain is Biotin synthase (334 aa).

Residues 54–281 (QAIQLSTLLS…KSYVRLSAGR (228 aa)) form the Radical SAM core domain. [4Fe-4S] cluster is bound by residues Cys69, Cys73, and Cys76. [2Fe-2S] cluster contacts are provided by Cys113, Cys144, Cys204, and Arg276.

Belongs to the radical SAM superfamily. Biotin synthase family. Homodimer. The cofactor is [4Fe-4S] cluster. [2Fe-2S] cluster is required as a cofactor.

It carries out the reaction (4R,5S)-dethiobiotin + (sulfur carrier)-SH + 2 reduced [2Fe-2S]-[ferredoxin] + 2 S-adenosyl-L-methionine = (sulfur carrier)-H + biotin + 2 5'-deoxyadenosine + 2 L-methionine + 2 oxidized [2Fe-2S]-[ferredoxin]. Its pathway is cofactor biosynthesis; biotin biosynthesis; biotin from 7,8-diaminononanoate: step 2/2. Its function is as follows. Catalyzes the conversion of dethiobiotin (DTB) to biotin by the insertion of a sulfur atom into dethiobiotin via a radical-based mechanism. The chain is Biotin synthase from Haemophilus ducreyi (strain 35000HP / ATCC 700724).